A 265-amino-acid chain; its full sequence is uncharacterized protein (265 aa).

The disordered stretch occupies residues 1–160 (MDKSKNLFDL…STEPVVAAPV (160 aa)). Residues 28 to 42 (AAAAPVAAKKPVAPK) are compositionally biased toward low complexity. Composition is skewed to basic and acidic residues over residues 73-85 (SEERQNTKRDSKS) and 102-119 (RQFDRKSGTGRPHNENKK).

Belongs to the SERBP1-HABP4 family.

Its function is as follows. Ribosome-binding protein that acts as a regulator of mRNA translation by promoting ribosome inactivation. This is an uncharacterized protein from Dictyostelium discoideum (Social amoeba).